The chain runs to 442 residues: Cell division protein FtsZ (442 aa).

Residues 18–22, 105–107, Glu136, Arg140, and Asp184 each bind GTP; these read GGGVN and GTG. The span at 329–341 shows a compositional bias: low complexity; the sequence is AAPAAEPVQQQVP. The segment at 329–442 is disordered; it reads AAPAAEPVQQ…DDLDVPSFLQ (114 aa). 2 stretches are compositionally biased toward basic and acidic residues: residues 349–362 and 390–431; these read PEKESIFGGAREEN and NDRD…RDDR.

The protein belongs to the FtsZ family. In terms of assembly, homodimer. Polymerizes to form a dynamic ring structure in a strictly GTP-dependent manner. Interacts directly with several other division proteins.

It is found in the cytoplasm. Functionally, essential cell division protein that forms a contractile ring structure (Z ring) at the future cell division site. The regulation of the ring assembly controls the timing and the location of cell division. One of the functions of the FtsZ ring is to recruit other cell division proteins to the septum to produce a new cell wall between the dividing cells. Binds GTP and shows GTPase activity. The polypeptide is Cell division protein FtsZ (Corynebacterium glutamicum (strain ATCC 13032 / DSM 20300 / JCM 1318 / BCRC 11384 / CCUG 27702 / LMG 3730 / NBRC 12168 / NCIMB 10025 / NRRL B-2784 / 534)).